Consider the following 178-residue polypeptide: Ribosomal RNA small subunit methyltransferase G (178 aa).

S-adenosyl-L-methionine is bound by residues G54, L59, 105–106, and R120; that span reads LE.

The protein belongs to the methyltransferase superfamily. RNA methyltransferase RsmG family.

Its subcellular location is the cytoplasm. The catalysed reaction is guanosine(527) in 16S rRNA + S-adenosyl-L-methionine = N(7)-methylguanosine(527) in 16S rRNA + S-adenosyl-L-homocysteine. Functionally, specifically methylates the N7 position of guanine in position 527 of 16S rRNA. In Helicobacter pylori (strain HPAG1), this protein is Ribosomal RNA small subunit methyltransferase G.